The following is a 233-amino-acid chain: Ribonuclease 3 (233 aa).

The RNase III domain maps to 4–126 (LNKLMERLGH…IVGAIYIDAG (123 aa)). A Mg(2+)-binding site is contributed by Glu39. The active site involves Asp43. Mg(2+) contacts are provided by Asp112 and Glu115. Glu115 is a catalytic residue. The 70-residue stretch at 153–222 (DAKSLLQEWL…AKRFLELLDD (70 aa)) folds into the DRBM domain.

It belongs to the ribonuclease III family. As to quaternary structure, homodimer. It depends on Mg(2+) as a cofactor.

It is found in the cytoplasm. It catalyses the reaction Endonucleolytic cleavage to 5'-phosphomonoester.. Digests double-stranded RNA. Involved in the processing of primary rRNA transcript to yield the immediate precursors to the large and small rRNAs (23S and 16S). Processes some mRNAs, and tRNAs when they are encoded in the rRNA operon. Processes pre-crRNA and tracrRNA of type II CRISPR loci if present in the organism. This is Ribonuclease 3 from Coxiella burnetii (strain Dugway 5J108-111).